A 485-amino-acid chain; its full sequence is MEREVQRVRQAFLSGRSRPLRFRLQQLEALRRMVQEREKDILAAIAADLCKSELNAYSQEVITVLGEIDFMLENLPEWVTAKPVKKNLLTMMDEAYIQPQPLGVVLIIGAWNYPFVLIIQPLIGAIAAGNAVIIKPSELSENTAKIVAKLLPQYLDQDLYVVINGGVEETTELLKQRFDHIFYTGNTAVGKIVMEAAAKHLTPVTLELGGKSPCYIDKDCDLDIVCRRITWGKYMNCGQTCIAPDYILCEASLQSQIVWKIKETVKEFYGENIKESPDYERIINLRHFKRILSLLEGQKIALGGETDEATRYIAPTVLTDVDPKTKVMQEEIFGPVLPIVPVKNVDEATDFINEREKPLALYVFSHNHKLIKRMIDETSSGGVTGNDVIMHFTLNSFPFGGVGSSGMGAYHGKHSFDTFSHQRPCLLKSLKREGANKLRYPPNSQSKVDWGKFFLLRRFNKEKLGLLVLTFLGIVAAVLVNAGYY.

Residues 1-463 (MEREVQRVRQ…FLLRRFNKEK (463 aa)) are Cytoplasmic-facing. 185–190 (GNTAVG) provides a ligand contact to NAD(+). Active-site residues include Glu207 and Cys241. Residue Ser293 is modified to Phosphoserine. Residues 464 to 484 (LGLLVLTFLGIVAAVLVNAGY) form a helical membrane-spanning segment. Positions 481 to 484 (NAGY) match the Prevents secretion from ER motif.

The protein belongs to the aldehyde dehydrogenase family. Homodimer.

It localises to the microsome membrane. The protein localises to the endoplasmic reticulum membrane. The enzyme catalyses an aldehyde + NAD(+) + H2O = a carboxylate + NADH + 2 H(+). It catalyses the reaction a fatty aldehyde + NAD(+) + H2O = a fatty acid + NADH + 2 H(+). The catalysed reaction is (2E)-hexadecenal + NAD(+) + H2O = (E)-hexadec-2-enoate + NADH + 2 H(+). It carries out the reaction hexadecanoate + NADH + 2 H(+) = hexadecanal + NAD(+) + H2O. The enzyme catalyses 22-oxodocosanoate + NAD(+) + H2O = docosanedioate + NADH + 2 H(+). It catalyses the reaction 2,6,10,14-tetramethylpentadecanal + NAD(+) + H2O = 2,6,10,14-tetramethylpentadecanoate + NADH + 2 H(+). The catalysed reaction is octadecanal + NAD(+) + H2O = octadecanoate + NADH + 2 H(+). It carries out the reaction dodecanoate + NADH + 2 H(+) = dodecanal + NAD(+) + H2O. The enzyme catalyses decanal + NAD(+) + H2O = decanoate + NADH + 2 H(+). It catalyses the reaction tetradecanal + NAD(+) + H2O = tetradecanoate + NADH + 2 H(+). The catalysed reaction is octanal + NAD(+) + H2O = octanoate + NADH + 2 H(+). It carries out the reaction heptanal + NAD(+) + H2O = heptanoate + NADH + 2 H(+). The enzyme catalyses (2E,6E)-farnesal + NAD(+) + H2O = (2E,6E)-farnesoate + NADH + 2 H(+). In terms of biological role, catalyzes the oxidation of medium and long-chain aliphatic aldehydes to fatty acids. Active on a variety of saturated and unsaturated aliphatic aldehydes between 6 and 24 carbons in length. Responsible for conversion of the sphingosine 1-phosphate (S1P) degradation product hexadecenal to hexadecenoic acid. This is Aldehyde dehydrogenase family 3 member A2 (ALDH3A2) from Macaca fascicularis (Crab-eating macaque).